Reading from the N-terminus, the 444-residue chain is MYRARIRGIYATALTKLALDWGFKVVQPTEKIARRFGLEPDFSPPDITVKDHESKTGIVAMGLCEAVEAFLSKLTEYADPIVARARARLKEVFVGRAVGEATVEGPGGEVFDVPRRYVLTPGATGIYTVVRPPIGPLKGVAAPEIVVEGQYVELNTTGRVSYSEHIPAEEAVRLRILAETRLRQYASIGLRFKSSARYAPDDAIAAEAEALYKEMLEISKGGSPGQVLRRGKCFAVVLFDSASKARLDEARAAVVPTVRGHHALRAQGLGKCLDLLDHVGGDVYEKAAEFLAGEAAAVYHVKPWGEVVKMRAEPVGVRGGVLVLRRRLRPGGVLDGIGVKIERGFYALTCVPRGKGYVVHTYYTAEGKAVGTYVNANTVPEWGRRVIYIDLLVDKAFDGGGERVLDLDEYEKYAEMFPQRLRDPLSRLPKTPIWCTEEGIKTVA.

This sequence belongs to the FAU-1 family.

Its function is as follows. Probable RNase involved in rRNA stability through maturation and/or degradation of precursor rRNAs. Binds to RNA in loop regions with AU-rich sequences. The chain is Probable ribonuclease FAU-1 from Pyrobaculum arsenaticum (strain DSM 13514 / JCM 11321 / PZ6).